Reading from the N-terminus, the 600-residue chain is Proline--tRNA ligase (600 aa).

It belongs to the class-II aminoacyl-tRNA synthetase family. ProS type 1 subfamily. Homodimer.

The protein resides in the cytoplasm. It catalyses the reaction tRNA(Pro) + L-proline + ATP = L-prolyl-tRNA(Pro) + AMP + diphosphate. Its function is as follows. Catalyzes the attachment of proline to tRNA(Pro) in a two-step reaction: proline is first activated by ATP to form Pro-AMP and then transferred to the acceptor end of tRNA(Pro). As ProRS can inadvertently accommodate and process non-cognate amino acids such as alanine and cysteine, to avoid such errors it has two additional distinct editing activities against alanine. One activity is designated as 'pretransfer' editing and involves the tRNA(Pro)-independent hydrolysis of activated Ala-AMP. The other activity is designated 'posttransfer' editing and involves deacylation of mischarged Ala-tRNA(Pro). The misacylated Cys-tRNA(Pro) is not edited by ProRS. The chain is Proline--tRNA ligase from Synechococcus sp. (strain RCC307).